Here is a 214-residue protein sequence, read N- to C-terminus: Thiamine-phosphate synthase (214 aa).

Residues 38–42 (QLREK) and asparagine 70 contribute to the 4-amino-2-methyl-5-(diphosphooxymethyl)pyrimidine site. 2 residues coordinate Mg(2+): aspartate 71 and aspartate 90. Residues serine 109 and lysine 138 each contribute to the 4-amino-2-methyl-5-(diphosphooxymethyl)pyrimidine site. Glycine 165 is a binding site for 2-[(2R,5Z)-2-carboxy-4-methylthiazol-5(2H)-ylidene]ethyl phosphate.

Belongs to the thiamine-phosphate synthase family. It depends on Mg(2+) as a cofactor.

It catalyses the reaction 2-[(2R,5Z)-2-carboxy-4-methylthiazol-5(2H)-ylidene]ethyl phosphate + 4-amino-2-methyl-5-(diphosphooxymethyl)pyrimidine + 2 H(+) = thiamine phosphate + CO2 + diphosphate. It carries out the reaction 2-(2-carboxy-4-methylthiazol-5-yl)ethyl phosphate + 4-amino-2-methyl-5-(diphosphooxymethyl)pyrimidine + 2 H(+) = thiamine phosphate + CO2 + diphosphate. The catalysed reaction is 4-methyl-5-(2-phosphooxyethyl)-thiazole + 4-amino-2-methyl-5-(diphosphooxymethyl)pyrimidine + H(+) = thiamine phosphate + diphosphate. It participates in cofactor biosynthesis; thiamine diphosphate biosynthesis; thiamine phosphate from 4-amino-2-methyl-5-diphosphomethylpyrimidine and 4-methyl-5-(2-phosphoethyl)-thiazole: step 1/1. Condenses 4-methyl-5-(beta-hydroxyethyl)thiazole monophosphate (THZ-P) and 2-methyl-4-amino-5-hydroxymethyl pyrimidine pyrophosphate (HMP-PP) to form thiamine monophosphate (TMP). In Caldanaerobacter subterraneus subsp. tengcongensis (strain DSM 15242 / JCM 11007 / NBRC 100824 / MB4) (Thermoanaerobacter tengcongensis), this protein is Thiamine-phosphate synthase.